The following is a 392-amino-acid chain: Protein FAM185A (392 aa).

Residues 39–60 (YSSGGSERWPGSETEVPPPGPG) are disordered.

This chain is Protein FAM185A (FAM185A), found in Homo sapiens (Human).